The sequence spans 125 residues: N-alpha-acetyltransferase 38, NatC auxiliary subunit (125 aa).

Residues 1-42 (MAGAGPTMLLREENGCCSRRQSSSSAGDSDGEQEDSPATRAR) are disordered. Alanine 2 is modified (N-acetylalanine). Over residues 18 to 28 (SRRQSSSSAGD) the composition is skewed to low complexity. Residues serine 22, serine 25, and serine 29 each carry the phosphoserine modification. The region spanning 40–118 (RARQQLEALL…IVSIEVQRES (79 aa)) is the Sm domain.

The protein belongs to the snRNP Sm proteins family. In terms of assembly, component of the N-terminal acetyltransferase C (NatC) complex, which is composed of NAA35, NAA38 and NAA30.

It localises to the cytoplasm. The protein localises to the nucleus. Functionally, auxillary component of the N-terminal acetyltransferase C (NatC) complex which catalyzes acetylation of N-terminal methionine residues. N-terminal acetylation protects proteins from ubiquitination and degradation by the N-end rule pathway. This chain is N-alpha-acetyltransferase 38, NatC auxiliary subunit (Naa38), found in Mus musculus (Mouse).